A 122-amino-acid chain; its full sequence is Large ribosomal subunit protein uL14 (122 aa).

Belongs to the universal ribosomal protein uL14 family. Part of the 50S ribosomal subunit. Forms a cluster with proteins L3 and L19. In the 70S ribosome, L14 and L19 interact and together make contacts with the 16S rRNA in bridges B5 and B8.

Binds to 23S rRNA. Forms part of two intersubunit bridges in the 70S ribosome. This is Large ribosomal subunit protein uL14 from Geobacillus kaustophilus (strain HTA426).